Here is a 414-residue protein sequence, read N- to C-terminus: uncharacterized protein (414 aa).

This is an uncharacterized protein from Rickettsia conorii (strain ATCC VR-613 / Malish 7).